The sequence spans 521 residues: Calcium-dependent protein kinase 33 (521 aa).

The N-myristoyl glycine moiety is linked to residue glycine 2. Positions 15 to 56 are disordered; sequence PQQNGERSVEIENRRRSTHQDPSKISTGTNQPPPWRNPAKHS. Basic and acidic residues predominate over residues 21-36; that stretch reads RSVEIENRRRSTHQDP. Residues 73 to 331 form the Protein kinase domain; that stretch reads YTLSKELGRG…AAEVLKHPWL (259 aa). ATP contacts are provided by residues 79 to 87 and lysine 102; that span reads LGRGQFGVT. The Proton acceptor role is filled by aspartate 197. Phosphoserine is present on serine 237. The autoinhibitory domain stretch occupies residues 337 to 367; the sequence is ASDKPIDSAVLSRMKQFRAMNKLKKLALKVI. EF-hand domains follow at residues 374 to 409, 410 to 445, 446 to 481, and 482 to 516; these read EEIQ…LGSR, LTEA…RHRL, ESNE…YGMG, and DDAT…GNPQ. Residues aspartate 387, aspartate 389, serine 391, threonine 393, glutamate 398, aspartate 423, aspartate 425, asparagine 427, serine 429, glutamate 434, aspartate 459, aspartate 461, serine 463, tyrosine 465, glutamate 470, aspartate 494, aspartate 496, aspartate 498, arginine 500, and glutamate 505 each contribute to the Ca(2+) site.

Belongs to the protein kinase superfamily. Ser/Thr protein kinase family. CDPK subfamily. In terms of assembly, interacts with THI1. Interacts with FD and FDP. Autophosphorylated. As to expression, expressed in primary roots, leaves, inflorescences, siliques and guard cells. Expressed in the shoot apical meristem.

The protein localises to the cell membrane. Its subcellular location is the nucleus. It is found in the cytoplasm. The enzyme catalyses L-seryl-[protein] + ATP = O-phospho-L-seryl-[protein] + ADP + H(+). It carries out the reaction L-threonyl-[protein] + ATP = O-phospho-L-threonyl-[protein] + ADP + H(+). With respect to regulation, activated by calcium. Autophosphorylation may play an important role in the regulation of the kinase activity. Repressed by THI1 through a negative regulation of the autophosphorylation activity in the presence of Ca(2+). Ca(2+)-dependent protein kinase. Negative regulator of stomatal closure and slow anion currents. Unable to phosphorylate THI1 in vitro, but the kinase activity is essential for the stomatal closure regulation. Phosphorylates FD. May play a role in signal transduction pathways that involve calcium as a second messenger. This Arabidopsis thaliana (Mouse-ear cress) protein is Calcium-dependent protein kinase 33.